The chain runs to 186 residues: Tumor necrosis factor alpha-induced protein 8-like protein 1 (186 aa).

The protein belongs to the TNFAIP8 family. Interacts with FBXW5; TNFAIP8L1 competes with TSC2 to bind FBXW5 increasing TSC2 stability by preventing its ubiquitination. As to expression, detected in wide variety tissues, such as neurons in brain, hepatocytes, germ cells of female and male reproductive organs, muscular tissues and variety types of cells of the epithelial origin (at protein level).

Its subcellular location is the cytoplasm. Functionally, acts as a negative regulator of mTOR activity. The chain is Tumor necrosis factor alpha-induced protein 8-like protein 1 (Tnfaip8l1) from Mus musculus (Mouse).